Here is a 132-residue protein sequence, read N- to C-terminus: MKSCEIGQQGESAAALFLYNKGMSILERNWRKGRFEIDLVCQDIKTLVFVEVRTRKAKGMLLPEQTLTISKRCNIIHSAQLYLMDKKDWSMPCRFDVICIISKKTTLELEHYKNVFEFYEIMDSSNTSWQPW.

This sequence belongs to the UPF0102 family.

The protein is UPF0102 protein LI0223 of Lawsonia intracellularis (strain PHE/MN1-00).